We begin with the raw amino-acid sequence, 97 residues long: Putative regulatory protein Dole_1911 (97 aa).

It belongs to the RemA family.

The protein is Putative regulatory protein Dole_1911 of Desulfosudis oleivorans (strain DSM 6200 / JCM 39069 / Hxd3) (Desulfococcus oleovorans).